The chain runs to 626 residues: Phosphomethylpyrimidine synthase (626 aa).

Substrate-binding positions include N237, M266, Y295, H331, 351–353, 392–395, and E431; these read SRG and DGLR. H435 contacts Zn(2+). Y458 contributes to the substrate binding site. Position 499 (H499) interacts with Zn(2+). [4Fe-4S] cluster contacts are provided by C579, C582, and C587.

It belongs to the ThiC family. In terms of assembly, homodimer. [4Fe-4S] cluster is required as a cofactor.

It carries out the reaction 5-amino-1-(5-phospho-beta-D-ribosyl)imidazole + S-adenosyl-L-methionine = 4-amino-2-methyl-5-(phosphooxymethyl)pyrimidine + CO + 5'-deoxyadenosine + formate + L-methionine + 3 H(+). The protein operates within cofactor biosynthesis; thiamine diphosphate biosynthesis. Functionally, catalyzes the synthesis of the hydroxymethylpyrimidine phosphate (HMP-P) moiety of thiamine from aminoimidazole ribotide (AIR) in a radical S-adenosyl-L-methionine (SAM)-dependent reaction. In Cupriavidus necator (strain ATCC 17699 / DSM 428 / KCTC 22496 / NCIMB 10442 / H16 / Stanier 337) (Ralstonia eutropha), this protein is Phosphomethylpyrimidine synthase.